We begin with the raw amino-acid sequence, 883 residues long: Valine--tRNA ligase (883 aa).

Residues 46–56 (PNVTGKLHLGH) carry the 'HIGH' region motif. The short motif at 520–524 (KMSKS) is the 'KMSKS' region element. An ATP-binding site is contributed by K523. A coiled-coil region spans residues 809-844 (LVDLLNVEEELARLEKELAKWQKELDMVGKKLSNER).

This sequence belongs to the class-I aminoacyl-tRNA synthetase family. ValS type 1 subfamily. Monomer.

It localises to the cytoplasm. The enzyme catalyses tRNA(Val) + L-valine + ATP = L-valyl-tRNA(Val) + AMP + diphosphate. Functionally, catalyzes the attachment of valine to tRNA(Val). As ValRS can inadvertently accommodate and process structurally similar amino acids such as threonine, to avoid such errors, it has a 'posttransfer' editing activity that hydrolyzes mischarged Thr-tRNA(Val) in a tRNA-dependent manner. The protein is Valine--tRNA ligase of Streptococcus pneumoniae (strain ATCC BAA-255 / R6).